Reading from the N-terminus, the 192-residue chain is Large ribosomal subunit protein uL18 (192 aa).

The protein belongs to the universal ribosomal protein uL18 family. In terms of assembly, part of the 50S ribosomal subunit. Contacts the 5S and 23S rRNAs.

Its function is as follows. This is one of the proteins that bind and probably mediate the attachment of the 5S RNA into the large ribosomal subunit, where it forms part of the central protuberance. The protein is Large ribosomal subunit protein uL18 of Methanothermobacter thermautotrophicus (strain ATCC 29096 / DSM 1053 / JCM 10044 / NBRC 100330 / Delta H) (Methanobacterium thermoautotrophicum).